The sequence spans 176 residues: ATP synthase subunit b, chloroplastic (176 aa).

A helical membrane pass occupies residues 27–49 (ILNLAAVFALLAYVGTDFVSSLL).

This sequence belongs to the ATPase B chain family. In terms of assembly, F-type ATPases have 2 components, F(1) - the catalytic core - and F(0) - the membrane proton channel. F(1) has five subunits: alpha(3), beta(3), gamma(1), delta(1), epsilon(1). F(0) has four main subunits: a(1), b(1), b'(1) and c(10-14). The alpha and beta chains form an alternating ring which encloses part of the gamma chain. F(1) is attached to F(0) by a central stalk formed by the gamma and epsilon chains, while a peripheral stalk is formed by the delta, b and b' chains.

It is found in the plastid. Its subcellular location is the chloroplast thylakoid membrane. In terms of biological role, f(1)F(0) ATP synthase produces ATP from ADP in the presence of a proton or sodium gradient. F-type ATPases consist of two structural domains, F(1) containing the extramembraneous catalytic core and F(0) containing the membrane proton channel, linked together by a central stalk and a peripheral stalk. During catalysis, ATP synthesis in the catalytic domain of F(1) is coupled via a rotary mechanism of the central stalk subunits to proton translocation. Component of the F(0) channel, it forms part of the peripheral stalk, linking F(1) to F(0). The sequence is that of ATP synthase subunit b, chloroplastic from Nephroselmis olivacea (Green alga).